Consider the following 149-residue polypeptide: Deoxyuridine 5'-triphosphate nucleotidohydrolase (149 aa).

Residues 68 to 70 (RSG), N81, and 85 to 87 (LID) each bind substrate.

This sequence belongs to the dUTPase family. Mg(2+) is required as a cofactor.

The enzyme catalyses dUTP + H2O = dUMP + diphosphate + H(+). It functions in the pathway pyrimidine metabolism; dUMP biosynthesis; dUMP from dCTP (dUTP route): step 2/2. Functionally, this enzyme is involved in nucleotide metabolism: it produces dUMP, the immediate precursor of thymidine nucleotides and it decreases the intracellular concentration of dUTP so that uracil cannot be incorporated into DNA. This Nitrosomonas eutropha (strain DSM 101675 / C91 / Nm57) protein is Deoxyuridine 5'-triphosphate nucleotidohydrolase.